Here is a 342-residue protein sequence, read N- to C-terminus: Elongation factor Ts (342 aa).

Positions 79-82 (TDFV) are involved in Mg(2+) ion dislocation from EF-Tu.

Belongs to the EF-Ts family.

It is found in the cytoplasm. Associates with the EF-Tu.GDP complex and induces the exchange of GDP to GTP. It remains bound to the aminoacyl-tRNA.EF-Tu.GTP complex up to the GTP hydrolysis stage on the ribosome. The sequence is that of Elongation factor Ts (tsf) from Lactococcus lactis subsp. lactis (strain IL1403) (Streptococcus lactis).